Here is a 356-residue protein sequence, read N- to C-terminus: UDP-N-acetylglucosamine--N-acetylmuramyl-(pentapeptide) pyrophosphoryl-undecaprenol N-acetylglucosamine transferase (356 aa).

Residues 15-17 (TGG), Asn-127, Arg-163, Ser-191, Ile-244, 263-268 (ALTVSE), and Gln-288 contribute to the UDP-N-acetyl-alpha-D-glucosamine site.

Belongs to the glycosyltransferase 28 family. MurG subfamily.

The protein localises to the cell inner membrane. The enzyme catalyses di-trans,octa-cis-undecaprenyl diphospho-N-acetyl-alpha-D-muramoyl-L-alanyl-D-glutamyl-meso-2,6-diaminopimeloyl-D-alanyl-D-alanine + UDP-N-acetyl-alpha-D-glucosamine = di-trans,octa-cis-undecaprenyl diphospho-[N-acetyl-alpha-D-glucosaminyl-(1-&gt;4)]-N-acetyl-alpha-D-muramoyl-L-alanyl-D-glutamyl-meso-2,6-diaminopimeloyl-D-alanyl-D-alanine + UDP + H(+). The protein operates within cell wall biogenesis; peptidoglycan biosynthesis. Its function is as follows. Cell wall formation. Catalyzes the transfer of a GlcNAc subunit on undecaprenyl-pyrophosphoryl-MurNAc-pentapeptide (lipid intermediate I) to form undecaprenyl-pyrophosphoryl-MurNAc-(pentapeptide)GlcNAc (lipid intermediate II). The polypeptide is UDP-N-acetylglucosamine--N-acetylmuramyl-(pentapeptide) pyrophosphoryl-undecaprenol N-acetylglucosamine transferase (Klebsiella pneumoniae subsp. pneumoniae (strain ATCC 700721 / MGH 78578)).